The following is a 173-amino-acid chain: Crossover junction endodeoxyribonuclease RuvC (173 aa).

Catalysis depends on residues Asp8, Glu67, and Asp139. Mg(2+) contacts are provided by Asp8, Glu67, and Asp139.

Belongs to the RuvC family. Homodimer which binds Holliday junction (HJ) DNA. The HJ becomes 2-fold symmetrical on binding to RuvC with unstacked arms; it has a different conformation from HJ DNA in complex with RuvA. In the full resolvosome a probable DNA-RuvA(4)-RuvB(12)-RuvC(2) complex forms which resolves the HJ. Mg(2+) serves as cofactor.

Its subcellular location is the cytoplasm. The catalysed reaction is Endonucleolytic cleavage at a junction such as a reciprocal single-stranded crossover between two homologous DNA duplexes (Holliday junction).. The RuvA-RuvB-RuvC complex processes Holliday junction (HJ) DNA during genetic recombination and DNA repair. Endonuclease that resolves HJ intermediates. Cleaves cruciform DNA by making single-stranded nicks across the HJ at symmetrical positions within the homologous arms, yielding a 5'-phosphate and a 3'-hydroxyl group; requires a central core of homology in the junction. The consensus cleavage sequence is 5'-(A/T)TT(C/G)-3'. Cleavage occurs on the 3'-side of the TT dinucleotide at the point of strand exchange. HJ branch migration catalyzed by RuvA-RuvB allows RuvC to scan DNA until it finds its consensus sequence, where it cleaves and resolves the cruciform DNA. This Shewanella sediminis (strain HAW-EB3) protein is Crossover junction endodeoxyribonuclease RuvC.